We begin with the raw amino-acid sequence, 221 residues long: Pre-hexon-linking protein VIII (221 aa).

Threonine 65 carries the phosphothreonine; by host modification. Residues 113–150 (AAPWSGVKTGSFCGRGLQLAEPPTTAIYPSGLFHLGRG) constitute a propeptide that is removed on maturation.

The protein belongs to the adenoviridae hexon-linking protein family. In terms of assembly, interacts with the peripentonal hexons as well as the hexons in the facets. Part of a complex composed of the core-capsid bridging protein, the endosome lysis protein VI and the hexon-linking protein VIII; these interactions bridge the virus core to the capsid. Cleaved by the viral protease during virion maturation. May cause the middle segment to be shed from the capsid.

It is found in the virion. It localises to the host nucleus. Structural component of the virion that acts as a cement protein on the capsid interior and which glue the peripentonal hexons and group-of-nine hexons together. This chain is Pre-hexon-linking protein VIII, found in Sus scrofa (Pig).